The chain runs to 199 residues: Probable nicotinate-nucleotide adenylyltransferase (199 aa).

The protein belongs to the NadD family.

It carries out the reaction nicotinate beta-D-ribonucleotide + ATP + H(+) = deamido-NAD(+) + diphosphate. Its pathway is cofactor biosynthesis; NAD(+) biosynthesis; deamido-NAD(+) from nicotinate D-ribonucleotide: step 1/1. Functionally, catalyzes the reversible adenylation of nicotinate mononucleotide (NaMN) to nicotinic acid adenine dinucleotide (NaAD). This chain is Probable nicotinate-nucleotide adenylyltransferase, found in Rhizobium johnstonii (strain DSM 114642 / LMG 32736 / 3841) (Rhizobium leguminosarum bv. viciae).